The sequence spans 350 residues: B1 bradykinin receptor (350 aa).

Topologically, residues 1–41 are extracellular; it reads MASRAPLELLPLNRSQLSPPNATTCDDAPEAWDLLHRVLPS. 2 N-linked (GlcNAc...) asparagine glycosylation sites follow: Asn13 and Asn21. A helical membrane pass occupies residues 42 to 62; the sequence is VIIIICVCGLLGNLLVLAVLL. Topologically, residues 63 to 72 are cytoplasmic; it reads RPRRRLNVAE. The helical transmembrane segment at 73-93 threads the bilayer; sequence MYLANLAASDLVFVLGLPFWA. Over 94–110 the chain is Extracellular; that stretch reads ANISNQFRWPFGGLLCR. Asn95 is a glycosylation site (N-linked (GlcNAc...) asparagine). A disulfide bond links Cys109 and Cys186. A helical transmembrane segment spans residues 111–131; the sequence is LVNGVIKANLFISIFLVVAIS. Residues 132–150 lie on the Cytoplasmic side of the membrane; sequence RDRYRALVHPMATRRRRQA. Residues 151 to 171 traverse the membrane as a helical segment; that stretch reads RATCVLIWVAGSLLSVPTFLF. The Extracellular portion of the chain corresponds to 172-204; that stretch reads RSIEAVPELNNDSACVLLHPPGAWHVARMVELN. Asn182 carries N-linked (GlcNAc...) asparagine glycosylation. A helical transmembrane segment spans residues 205–225; it reads VLGFLLPLAAIVFFNCHILAS. Residues 226-248 lie on the Cytoplasmic side of the membrane; the sequence is LRGRPEVRGARCGGPPDGRTTAL. Residues 249-269 form a helical membrane-spanning segment; the sequence is ILTFVAAFLVCWTPYHFFAFL. Topologically, residues 270-292 are extracellular; it reads EFLTQVQVVRGCFWENFKDLGLQ. A helical transmembrane segment spans residues 293 to 313; sequence YASFFAFINSCLNPVIYVFVG. The Cytoplasmic portion of the chain corresponds to 314-350; the sequence is RLFRTRVWDLFKQCAPRRPPAVSWSHRKRVLQLFWQN. Residue Cys327 is the site of S-palmitoyl cysteine attachment.

It belongs to the G-protein coupled receptor 1 family. Bradykinin receptor subfamily. BDKRB1 sub-subfamily.

The protein resides in the cell membrane. Its function is as follows. This is a receptor for bradykinin. Could be a factor in chronic pain and inflammation. This is B1 bradykinin receptor (BDKRB1) from Canis lupus familiaris (Dog).